Reading from the N-terminus, the 725-residue chain is Kelch domain-containing protein SSO1033 (725 aa).

The signal sequence occupies residues M1–H28. 6 Kelch repeats span residues S59–N100, T101–N145, A146–T199, L201–G248, L250–N297, and L299–G342. Fibronectin type-III domains are found at residues P323 to S410, V411 to S504, V505 to Y583, and P585 to Y665.

This is Kelch domain-containing protein SSO1033 from Saccharolobus solfataricus (strain ATCC 35092 / DSM 1617 / JCM 11322 / P2) (Sulfolobus solfataricus).